We begin with the raw amino-acid sequence, 73 residues long: Waprin-Phi2 (73 aa).

The first 21 residues, M1–A21, serve as a signal peptide directing secretion. A WAP domain is found at E22–R72. Intrachain disulfides connect C29–C59, C42–C63, C46–C58, and C52–C68.

This sequence belongs to the venom waprin family. In terms of tissue distribution, expressed by the venom gland.

It is found in the secreted. Functionally, damages membranes of susceptible bacteria. Has no hemolytic activity. Not toxic to mice. Does not inhibit the proteinases elastase and cathepsin G. In Philodryas olfersii (Green snake), this protein is Waprin-Phi2.